Consider the following 2543-residue polypeptide: Highly reducing polyketide synthase PKS2 (2543 aa).

In terms of domain architecture, Ketosynthase family 3 (KS3) spans 4-425 (EPRIAVIGLS…GSNSAILLEG (422 aa)). Residues Cys-174, His-309, and His-349 each act as for beta-ketoacyl synthase activity in the active site. Residues 573–902 (VFTGQGAQHA…TYLPTLFRGT (330 aa)) are malonyl-CoA:ACP transacylase (MAT) domain. The active-site For malonyltransferase activity is the Ser-662. The segment at 969 to 1101 (HPLLGRKISP…GQIEAEMTDM (133 aa)) is N-terminal hotdog fold. The 313-residue stretch at 969–1281 (HPLLGRKISP…FRNIGSAEEV (313 aa)) folds into the PKS/mFAS DH domain. The dehydratase (DH) domain stretch occupies residues 969 to 1283 (HPLLGRKISP…NIGSAEEVID (315 aa)). His-1001 serves as the catalytic Proton acceptor; for dehydratase activity. The interval 1119–1281 (TGLKEHDINA…FRNIGSAEEV (163 aa)) is C-terminal hotdog fold. Asp-1188 functions as the Proton donor; for dehydratase activity in the catalytic mechanism. Positions 1438–1631 (SKVLGYLTEY…LPSRYGTDKP (194 aa)) are methyltransferase (CMet) domain. The segment at 1847–2159 (GSPDTIYFQR…SGEHMGKMVI (313 aa)) is enoylreductase (ER) domain. A ketoreductase (KR) domain region spans residues 2184–2359 (ATYLVAGGTR…YTVSIALPVV (176 aa)). Positions 2463–2540 (DPLIGLTEAM…ALATEILSQR (78 aa)) constitute a Carrier domain. Ser-2500 carries the post-translational modification O-(pantetheine 4'-phosphoryl)serine.

Its pathway is secondary metabolite biosynthesis. Functionally, highly reducing polyketide synthase; part of the gene cluster that mediates the biosynthesis of phomenoic acid, a long chain aliphatic carboxylic acid that does not appear to be essential for pathogenicity but may play a role in allowing to outcompete other fungi in the environmental niche via its antifungal properties. The polyketide synthase produces the long methylated aliphatic carboxylic acid chain of phomenoic acid. The cluster-specific cytochrome P450 monooxygenase may then hydroxylate the methyl group of carbon 31. The putative dehydrogenase YogA, which has no obvious role in phomenoic acid biosynthesis, may further modify phomenoic acid to produce a compound not identified yet. This is Highly reducing polyketide synthase PKS2 from Leptosphaeria maculans (strain JN3 / isolate v23.1.3 / race Av1-4-5-6-7-8) (Blackleg fungus).